The following is an 89-amino-acid chain: Small ribosomal subunit protein bS16 (89 aa).

This sequence belongs to the bacterial ribosomal protein bS16 family.

The sequence is that of Small ribosomal subunit protein bS16 from Chloroflexus aggregans (strain MD-66 / DSM 9485).